A 353-amino-acid polypeptide reads, in one-letter code: Fe(3+) ions import ATP-binding protein FbpC (353 aa).

Positions 9–239 constitute an ABC transporter domain; that stretch reads VTFENVTKKF…PASAFIADFM (231 aa). Residue 41-48 participates in ATP binding; that stretch reads GLSGCGKT.

This sequence belongs to the ABC transporter superfamily. Fe(3+) ion importer (TC 3.A.1.10) family. As to quaternary structure, the complex is composed of two ATP-binding proteins (FbpC), two transmembrane proteins (FbpB) and a solute-binding protein (FbpA).

It localises to the cell inner membrane. The catalysed reaction is Fe(3+)(out) + ATP + H2O = Fe(3+)(in) + ADP + phosphate + H(+). In terms of biological role, part of the ABC transporter complex FbpABC involved in Fe(3+) ions import. Responsible for energy coupling to the transport system. The chain is Fe(3+) ions import ATP-binding protein FbpC from Brucella melitensis biotype 1 (strain ATCC 23456 / CCUG 17765 / NCTC 10094 / 16M).